The following is a 396-amino-acid chain: MTKTIAINAGSSSLKWQLYLMPEEKVLAKGLIERIGLKDSISTVKFDGRSEQQILDIENHTQAVKILLDDLIRFDIIKAYDEITGVGHRVVAGGEYFKESTVVEGDVLEKVEELSLLAPLHNPANAAGVRAFKELLPDITSVVVFDTSFHTSMPEKAYRYPLPTKYYTENKVRKYGAHGTSHQFVAGEAAKLLGRPLEDLKLITCHIGNGGSITAVKAGKSVDTSMGFTPLGGIMMGTRTGDIDPAIIPYLMQYTEDFNTPEDISRVLNRESGLLGVSANSSDMRDIEAAVAEGNHEASLAYEMYVDRIQKYIGQYLAVLNGADAIVFTAGVGENAENFRRDVISGISWFGCDVDDEKNVFGVTGDISTEAAKIRVLVIPTDEELVIARDVERLKK.

Mg(2+) is bound at residue Asn-8. Residue Lys-15 coordinates ATP. Arg-89 contributes to the substrate binding site. Asp-146 functions as the Proton donor/acceptor in the catalytic mechanism. ATP-binding positions include 206 to 210, 283 to 285, and 331 to 335; these read HIGNG, DMR, and GVGEN. Glu-383 serves as a coordination point for Mg(2+).

It belongs to the acetokinase family. Homodimer. Mg(2+) is required as a cofactor. It depends on Mn(2+) as a cofactor.

The protein resides in the cytoplasm. The enzyme catalyses acetate + ATP = acetyl phosphate + ADP. It participates in metabolic intermediate biosynthesis; acetyl-CoA biosynthesis; acetyl-CoA from acetate: step 1/2. In terms of biological role, catalyzes the formation of acetyl phosphate from acetate and ATP. Can also catalyze the reverse reaction. This Streptococcus pneumoniae (strain 70585) protein is Acetate kinase.